Here is a 225-residue protein sequence, read N- to C-terminus: Cytochrome c oxidase subunit 2 (225 aa).

Over methionine 1–asparagine 25 the chain is Mitochondrial intermembrane. Residues methionine 26 to methionine 47 form a helical membrane-spanning segment. Residues asparagine 48–glutamate 62 lie on the Mitochondrial matrix side of the membrane. Residues isoleucine 63–lysine 82 form a helical membrane-spanning segment. The Mitochondrial intermembrane portion of the chain corresponds to isoleucine 83–isoleucine 225. Histidine 159, cysteine 194, glutamate 196, cysteine 198, histidine 202, and methionine 205 together coordinate Cu cation. Mg(2+) is bound at residue glutamate 196.

The protein belongs to the cytochrome c oxidase subunit 2 family. In terms of assembly, component of the cytochrome c oxidase (complex IV, CIV), a multisubunit enzyme composed of a catalytic core of 3 subunits and several supernumerary subunits. The complex exists as a monomer or a dimer and forms supercomplexes (SCs) in the inner mitochondrial membrane with ubiquinol-cytochrome c oxidoreductase (cytochrome b-c1 complex, complex III, CIII). Cu cation is required as a cofactor.

It localises to the mitochondrion inner membrane. The catalysed reaction is 4 Fe(II)-[cytochrome c] + O2 + 8 H(+)(in) = 4 Fe(III)-[cytochrome c] + 2 H2O + 4 H(+)(out). In terms of biological role, component of the cytochrome c oxidase, the last enzyme in the mitochondrial electron transport chain which drives oxidative phosphorylation. The respiratory chain contains 3 multisubunit complexes succinate dehydrogenase (complex II, CII), ubiquinol-cytochrome c oxidoreductase (cytochrome b-c1 complex, complex III, CIII) and cytochrome c oxidase (complex IV, CIV), that cooperate to transfer electrons derived from NADH and succinate to molecular oxygen, creating an electrochemical gradient over the inner membrane that drives transmembrane transport and the ATP synthase. Cytochrome c oxidase is the component of the respiratory chain that catalyzes the reduction of oxygen to water. Electrons originating from reduced cytochrome c in the intermembrane space (IMS) are transferred via the dinuclear copper A center (CU(A)) of subunit 2 and heme A of subunit 1 to the active site in subunit 1, a binuclear center (BNC) formed by heme A3 and copper B (CU(B)). The BNC reduces molecular oxygen to 2 water molecules using 4 electrons from cytochrome c in the IMS and 4 protons from the mitochondrial matrix. In Apis mellifera ligustica (Common honeybee), this protein is Cytochrome c oxidase subunit 2 (COII).